The primary structure comprises 179 residues: MEVLRRYVLVFTSLCMTLFAWGENLQSIEADFEQIAVNEDGVPTRYEGHIIGKMPSKVKWDYKAPLQKEIYMNKNEVIMYEPRLEQVSHSRLKDKADFLSILKSAKKHNDGTYHTKVDGIEYVLFIDKAQKPERIEFVDSMGVKTTLKLKNVKLNGAISDKKFVFVPPQGVEIVELHSR.

The signal sequence occupies residues 1-22 (MEVLRRYVLVFTSLCMTLFAWG).

Belongs to the LolA family. Monomer.

It is found in the periplasm. Functionally, participates in the translocation of lipoproteins from the inner membrane to the outer membrane. Only forms a complex with a lipoprotein if the residue after the N-terminal Cys is not an aspartate (The Asp acts as a targeting signal to indicate that the lipoprotein should stay in the inner membrane). This chain is Outer-membrane lipoprotein carrier protein, found in Helicobacter hepaticus (strain ATCC 51449 / 3B1).